Consider the following 636-residue polypeptide: LEAF RUST 10 DISEASE-RESISTANCE LOCUS RECEPTOR-LIKE PROTEIN KINASE-like 1.5 (636 aa).

Positions 1 to 26 (MSQPPWRCFSLLIFVLTIFSTKPSSA) are cleaved as a signal peptide. Residues 27–257 (STSCSSSFHC…NNKRVNHIAV (231 aa)) are Extracellular-facing. N-linked (GlcNAc...) asparagine glycans are attached at residues Asn73, Asn102, Asn146, and Asn224. Residues 258 to 278 (LSLIFALTCLLLVFSVAVAIF) traverse the membrane as a helical segment. Residues 279–636 (RSRRASFLSS…RVADDDVAKN (358 aa)) lie on the Cytoplasmic side of the membrane. In terms of domain architecture, Protein kinase spans 324–628 (FDPKRKIGDG…LRRIRSHTRV (305 aa)). Residues 330 to 338 (IGDGGFGSV) and Lys352 each bind ATP. Asp458 serves as the catalytic Proton acceptor.

This sequence belongs to the protein kinase superfamily. Ser/Thr protein kinase family.

Its subcellular location is the cell membrane. The catalysed reaction is L-seryl-[protein] + ATP = O-phospho-L-seryl-[protein] + ADP + H(+). It carries out the reaction L-threonyl-[protein] + ATP = O-phospho-L-threonyl-[protein] + ADP + H(+). The chain is LEAF RUST 10 DISEASE-RESISTANCE LOCUS RECEPTOR-LIKE PROTEIN KINASE-like 1.5 from Arabidopsis thaliana (Mouse-ear cress).